We begin with the raw amino-acid sequence, 156 residues long: Small ribosomal subunit protein uS7 (156 aa).

It belongs to the universal ribosomal protein uS7 family. As to quaternary structure, part of the 30S ribosomal subunit. Contacts proteins S9 and S11.

Functionally, one of the primary rRNA binding proteins, it binds directly to 16S rRNA where it nucleates assembly of the head domain of the 30S subunit. Is located at the subunit interface close to the decoding center, probably blocks exit of the E-site tRNA. This is Small ribosomal subunit protein uS7 from Deinococcus radiodurans (strain ATCC 13939 / DSM 20539 / JCM 16871 / CCUG 27074 / LMG 4051 / NBRC 15346 / NCIMB 9279 / VKM B-1422 / R1).